We begin with the raw amino-acid sequence, 151 residues long: Putative pre-16S rRNA nuclease (151 aa).

It belongs to the YqgF nuclease family.

It localises to the cytoplasm. Could be a nuclease involved in processing of the 5'-end of pre-16S rRNA. The polypeptide is Putative pre-16S rRNA nuclease (Neisseria gonorrhoeae (strain ATCC 700825 / FA 1090)).